Here is a 439-residue protein sequence, read N- to C-terminus: High-energy light unresponsive protein 1 (439 aa).

At 1 to 67 the chain is on the cytoplasmic side; sequence MPPPSSHSNI…LGLNQSIRPN (67 aa). The helical transmembrane segment at 68 to 88 threads the bilayer; sequence NSLLFRIYSWLVFCLLLFTTL. The Extracellular segment spans residues 89-114; sequence RKFNQVGVRPNGTRENLQEFFANPRS. Residues 115–135 traverse the membrane as a helical segment; it reads MITLCNALIMLSGLLASLQLY. Residues 136–164 lie on the Cytoplasmic side of the membrane; sequence TLGAKRLKPLKILCQFSLNVRTKQAERRQ. A helical membrane pass occupies residues 165–185; that stretch reads FMINTFLAVFSGLLALTMAAT. Over 186–211 the chain is Extracellular; sequence YAMSKWGYILYIVGTPNLDTETIFCV. The helical transmembrane segment at 212 to 232 threads the bilayer; the sequence is LLDSYALFVSRAAISALAILF. At 233 to 290 the chain is on the cytoplasmic side; that stretch reads YQHCSVIRRSIKHLINEMVPAEQDECPLPESSLQKIHDCQISYQRIFNGKAVIEEYYS. A helical membrane pass occupies residues 291–311; the sequence is FVLFYSYGVCIPIFCFLMFVG. Topologically, residues 312–324 are extracellular; sequence MSAQSICWSEVVS. A helical transmembrane segment spans residues 325–345; sequence IVIWIVNAILVLLLFSLPAFM. Over 346–402 the chain is Cytoplasmic; it reads INEDGDRLVASSFRMYHETFHEERDLTVLSQMTFFTFQIHSTKLTLSACNYFYMDRS. Residues 403-423 traverse the membrane as a helical segment; it reads ILLSLFSAILTYFLILWEFDI. The Extracellular portion of the chain corresponds to 424-439; it reads KNNQSLQNIANHTIHT.

This sequence belongs to the insect chemoreceptor superfamily. Gustatory receptor (GR) family. As to expression, expressed in the AVG and PVT neurons of the tail.

It localises to the cell membrane. In terms of biological role, photoreceptor for short wavelength (UV) light that mediates UV-light-induced avoidance behavior. Directly senses and absorbs both UV-A and UV-B light with very high efficiency. Absorption of UV-B but not UV-A light shows resistance to photobleaching. In contrast to other photoreceptors, does not use a prosthetic chromophore to capture photons and only depends on its protein conformation. Might have a role in response to white light exposure. In Caenorhabditis elegans, this protein is High-energy light unresponsive protein 1.